The following is a 284-amino-acid chain: 4-diphosphocytidyl-2-C-methyl-D-erythritol kinase (284 aa).

K14 is an active-site residue. 98–108 (PMGGGLGGGSS) lines the ATP pocket. D140 is an active-site residue.

It belongs to the GHMP kinase family. IspE subfamily.

The catalysed reaction is 4-CDP-2-C-methyl-D-erythritol + ATP = 4-CDP-2-C-methyl-D-erythritol 2-phosphate + ADP + H(+). The protein operates within isoprenoid biosynthesis; isopentenyl diphosphate biosynthesis via DXP pathway; isopentenyl diphosphate from 1-deoxy-D-xylulose 5-phosphate: step 3/6. In terms of biological role, catalyzes the phosphorylation of the position 2 hydroxy group of 4-diphosphocytidyl-2C-methyl-D-erythritol. The sequence is that of 4-diphosphocytidyl-2-C-methyl-D-erythritol kinase from Shewanella pealeana (strain ATCC 700345 / ANG-SQ1).